We begin with the raw amino-acid sequence, 995 residues long: Endo-beta-N-acetylglucosaminidase EndoS (995 aa).

An N-terminal signal peptide occupies residues 1–36 (MDKHLLVKRTLGCVCAATLMGAALATHHDSLNTVKA). The region spanning 112-432 (SLYGGYFRTW…KDATDNIFHS (321 aa)) is the GH18 domain. The a glycoprotein site is built by His-151, Trp-153, and Arg-186. Glu-235 acts as the Proton donor in catalysis. Asp-237, Gln-303, Tyr-305, Glu-349, Glu-350, Asn-356, and Tyr-402 together coordinate a glycoprotein. LRR repeat units follow at residues 437–460 (SKAL…DFPD), 478–503 (LERF…KFKK), 562–585 (LTGL…DAAT), and 586–609 (LTSL…ENRQ). The segment at 765–923 (MVNLAEGATV…VPELQILGYP (159 aa)) is carbohydrate-binding module (CBM). Residues Lys-786, Asp-789, Gln-791, Pro-915, and Glu-916 each contribute to the Ca(2+) site. Residues 924–995 (LPNADTIMKT…CIEKRQLLKK (72 aa)) form a three-helix bundle (3H) region.

The protein belongs to the glycosyl hydrolase 18 family. Post-translationally, cleaved by SpeB protease; leading to loss of endoglucosidase activity. EndoS is produced and secreted prior to SpeB, suggesting that it is degraded after acting as a host immune evasion factor.

It localises to the secreted. Its subcellular location is the host extracellular space. The enzyme catalyses an N(4)-(oligosaccharide-(1-&gt;3)-[oligosaccharide-(1-&gt;6)]-beta-D-Man-(1-&gt;4)-beta-D-GlcNAc-(1-&gt;4)-alpha-D-GlcNAc)-L-asparaginyl-[protein] + H2O = an oligosaccharide-(1-&gt;3)-[oligosaccharide-(1-&gt;6)]-beta-D-Man-(1-&gt;4)-D-GlcNAc + N(4)-(N-acetyl-beta-D-glucosaminyl)-L-asparaginyl-[protein]. Endoglucosidase that acts as a host immune evasion factor by mediating hydrolysis of the N-linked glycan from the Fc region of host immunoglobulin-gamma (IgG) during infection. Specifically catalyzes the hydrolysis of the beta-1,4 linkage between the first two N-acetylglucosamine residues of the complex-type N-linked glycan located on 'Asn-297' of the Fc region of IgG antibodies (IGHG1, IGHG2, IGHG3 or IGHG4), thereby preventing interaction between IgGs and Fc receptors and ability to activate the complement pathway. Shows a specificity for biantennary complex type N-glycans; does neither cleave larger complex type glycans nor oligomannose and nor hybrid-type glycans. Specifically acts on IgGs; does not act on immunoglobulin alpha, beta, delta or mu. The chain is Endo-beta-N-acetylglucosaminidase EndoS from Streptococcus pyogenes serotype M1.